Reading from the N-terminus, the 374-residue chain is Type IV secretion system protein PtlG (374 aa).

Residues 38–56 traverse the membrane as a helical segment; sequence WMFALVAVALSCLLATGIW. The interval 86 to 117 is disordered; the sequence is HPREPEPAPLPDMPAAPDPILPQPRPAPPVPP. The segment covering 92 to 117 has biased composition (pro residues); that stretch reads PAPLPDMPAAPDPILPQPRPAPPVPP.

It belongs to the TrbI/VirB10 family.

The protein localises to the cell membrane. Functionally, component of the type IV secretion system ptl required for secretion of assembled pertussis toxin (PTX) through the outer membrane. This Bordetella pertussis (strain Tohama I / ATCC BAA-589 / NCTC 13251) protein is Type IV secretion system protein PtlG (ptlG).